An 88-amino-acid chain; its full sequence is Kunitz-type U15-theraphotoxin-Hhn1k (88 aa).

Positions 1–27 (MGTARFLRAVLLLSVLLMVTFPALLSA) are cleaved as a signal peptide. Positions 28–33 (EHHDGR) are excised as a propeptide. Positions 37-85 (CRLPSDSGDCLRFFEMWCFDGTTCTKFVYGGYGGNDNRFPTEKACMKRC) constitute a BPTI/Kunitz inhibitor domain. Disulfide bonds link cysteine 37/cysteine 85 and cysteine 60/cysteine 81.

The protein belongs to the venom Kunitz-type family. 03 (sub-Kunitz) subfamily. As to expression, expressed by the venom gland.

It localises to the secreted. In terms of biological role, serine protease inhibitor that inhibits trypsin at a molar ratio of 1:1. The chain is Kunitz-type U15-theraphotoxin-Hhn1k from Cyriopagopus hainanus (Chinese bird spider).